Here is a 714-residue protein sequence, read N- to C-terminus: Fatty acid oxidation complex subunit alpha (714 aa).

The segment at 1-190 (MDMTSAFTLN…KSGLVDEIVP (190 aa)) is enoyl-CoA hydratase. Positions 306–714 (GTLDSIGILG…FWKTSATDRH (409 aa)) are 3-hydroxyacyl-CoA dehydrogenase.

The protein in the N-terminal section; belongs to the enoyl-CoA hydratase/isomerase family. In the central section; belongs to the 3-hydroxyacyl-CoA dehydrogenase family. As to quaternary structure, heterotetramer of two alpha chains (FadJ) and two beta chains (FadI).

The protein resides in the cytoplasm. The enzyme catalyses a (3S)-3-hydroxyacyl-CoA = a (2E)-enoyl-CoA + H2O. The catalysed reaction is a 4-saturated-(3S)-3-hydroxyacyl-CoA = a (3E)-enoyl-CoA + H2O. It catalyses the reaction a (3S)-3-hydroxyacyl-CoA + NAD(+) = a 3-oxoacyl-CoA + NADH + H(+). It carries out the reaction (3S)-3-hydroxybutanoyl-CoA = (3R)-3-hydroxybutanoyl-CoA. It functions in the pathway lipid metabolism; fatty acid beta-oxidation. In terms of biological role, catalyzes the formation of a hydroxyacyl-CoA by addition of water on enoyl-CoA. Also exhibits 3-hydroxyacyl-CoA epimerase and 3-hydroxyacyl-CoA dehydrogenase activities. This Escherichia fergusonii (strain ATCC 35469 / DSM 13698 / CCUG 18766 / IAM 14443 / JCM 21226 / LMG 7866 / NBRC 102419 / NCTC 12128 / CDC 0568-73) protein is Fatty acid oxidation complex subunit alpha.